The following is a 110-amino-acid chain: UPF0060 membrane protein PBPRB0495 (110 aa).

The next 4 helical transmembrane spans lie at 7-27 (VGLF…PYLW), 33-53 (TIWL…LLTL), 63-83 (AAYG…VDGI), and 85-105 (PTVW…IIMF).

The protein belongs to the UPF0060 family.

The protein resides in the cell inner membrane. The chain is UPF0060 membrane protein PBPRB0495 from Photobacterium profundum (strain SS9).